The chain runs to 155 residues: Calmodulin, flagellar (155 aa).

4 EF-hand domains span residues 14–49, 50–85, 87–122, and 123–155; these read EQIA…LGQN, PTEA…KMKD, DNEE…LGEK, and LTDE…MMQK. Ca(2+) contacts are provided by Asp27, Asp29, Asp31, Thr33, Glu38, Asp63, Asp65, Asn67, Thr69, Glu74, Asp100, Asp102, Asn104, Glu111, Asp136, Asp138, Asp140, Gln142, and Glu147.

Belongs to the calmodulin family.

The protein localises to the cell projection. It is found in the cilium. It localises to the flagellum. Calmodulin mediates the control of a large number of enzymes, ion channels and other proteins by Ca(2+). Among the enzymes to be stimulated by the calmodulin-Ca(2+) complex are a number of protein kinases and phosphatases. The chain is Calmodulin, flagellar (CAM1) from Naegleria gruberi (Amoeba).